We begin with the raw amino-acid sequence, 549 residues long: Probable protein kinase UbiB (549 aa).

The region spanning 123–501 (DFNETPLASA…QQQAHKSNYL (379 aa)) is the Protein kinase domain. ATP contacts are provided by residues 129-137 (LASASISQV) and Lys152. Asp287 (proton acceptor) is an active-site residue. A run of 2 helical transmembrane segments spans residues 496 to 516 (HKSN…TLLI) and 520 to 540 (ATLW…FVGW).

It belongs to the ABC1 family. UbiB subfamily.

It localises to the cell inner membrane. Its pathway is cofactor biosynthesis; ubiquinone biosynthesis [regulation]. Functionally, is probably a protein kinase regulator of UbiI activity which is involved in aerobic coenzyme Q (ubiquinone) biosynthesis. In Shewanella baltica (strain OS185), this protein is Probable protein kinase UbiB.